The chain runs to 457 residues: Angiopoietin-related protein 6 (457 aa).

The signal sequence occupies residues 1–24 (MGTARLRKLQLLLLLGAWRALGGA). Coiled-coil stretches lie at residues 51–77 (DSELATLRMRLGRHEELLRALQRRAAE) and 126–164 (LLAERALDAEAEARRTTARLQQLDAQLREHAQLMSQHSS). A disordered region spans residues 201-235 (SNTSRRLDQTPEHQREQSLRQQGPPSSLLPTGHLA). An N-linked (GlcNAc...) asparagine glycan is attached at Asn202. Over residues 205 to 218 (RRLDQTPEHQREQS) the composition is skewed to basic and acidic residues. Residues 219–229 (LRQQGPPSSLL) are compositionally biased toward polar residues. Residues 238–456 (TRPVGPWRDC…KAVMLTRLVR (219 aa)) enclose the Fibrinogen C-terminal domain. Disulfide bonds link Cys247-Cys274 and Cys397-Cys410.

As to expression, highly expressed in the liver, specifically in hepatocytes, and weakly in the heart. Expressed in hematopoietic cells, platelets and mast cells, and detected at wounded skin.

It localises to the secreted. Functionally, may play a role in the wound healing process. May promote epidermal proliferation, remodeling and regeneration. May promote the chemotactic activity of endothelial cells and induce neovascularization. May counteract high-fat diet-induced obesity and related insulin resistance through increased energy expenditure. In Mus musculus (Mouse), this protein is Angiopoietin-related protein 6 (Angptl6).